A 225-amino-acid polypeptide reads, in one-letter code: 2-C-methyl-D-erythritol 4-phosphate cytidylyltransferase (225 aa).

The protein belongs to the IspD/TarI cytidylyltransferase family. IspD subfamily.

It catalyses the reaction 2-C-methyl-D-erythritol 4-phosphate + CTP + H(+) = 4-CDP-2-C-methyl-D-erythritol + diphosphate. Its pathway is isoprenoid biosynthesis; isopentenyl diphosphate biosynthesis via DXP pathway; isopentenyl diphosphate from 1-deoxy-D-xylulose 5-phosphate: step 2/6. In terms of biological role, catalyzes the formation of 4-diphosphocytidyl-2-C-methyl-D-erythritol from CTP and 2-C-methyl-D-erythritol 4-phosphate (MEP). The sequence is that of 2-C-methyl-D-erythritol 4-phosphate cytidylyltransferase from Haemophilus influenzae (strain 86-028NP).